Reading from the N-terminus, the 279-residue chain is Energy-coupling factor transporter ATP-binding protein EcfA1 (279 aa).

The ABC transporter domain occupies 5–240 (IELKKVTFNY…GDELLQLGLD (236 aa)). Residue 40–47 (GHNGSGKS) coordinates ATP.

This sequence belongs to the ABC transporter superfamily. Energy-coupling factor EcfA family. Forms a stable energy-coupling factor (ECF) transporter complex composed of 2 membrane-embedded substrate-binding proteins (S component), 2 ATP-binding proteins (A component) and 2 transmembrane proteins (T component).

It is found in the cell membrane. Functionally, ATP-binding (A) component of a common energy-coupling factor (ECF) ABC-transporter complex. Unlike classic ABC transporters this ECF transporter provides the energy necessary to transport a number of different substrates. In Streptococcus pyogenes serotype M12 (strain MGAS2096), this protein is Energy-coupling factor transporter ATP-binding protein EcfA1.